Reading from the N-terminus, the 278-residue chain is 2-dehydro-3-deoxyphosphooctonate aldolase (278 aa).

Belongs to the KdsA family.

It is found in the cytoplasm. It catalyses the reaction D-arabinose 5-phosphate + phosphoenolpyruvate + H2O = 3-deoxy-alpha-D-manno-2-octulosonate-8-phosphate + phosphate. The protein operates within carbohydrate biosynthesis; 3-deoxy-D-manno-octulosonate biosynthesis; 3-deoxy-D-manno-octulosonate from D-ribulose 5-phosphate: step 2/3. It functions in the pathway bacterial outer membrane biogenesis; lipopolysaccharide biosynthesis. This chain is 2-dehydro-3-deoxyphosphooctonate aldolase, found in Bartonella quintana (strain Toulouse) (Rochalimaea quintana).